A 367-amino-acid polypeptide reads, in one-letter code: Anhydro-N-acetylmuramic acid kinase (367 aa).

11 to 18 (GTSLDGVD) contributes to the ATP binding site.

It belongs to the anhydro-N-acetylmuramic acid kinase family.

It catalyses the reaction 1,6-anhydro-N-acetyl-beta-muramate + ATP + H2O = N-acetyl-D-muramate 6-phosphate + ADP + H(+). It participates in amino-sugar metabolism; 1,6-anhydro-N-acetylmuramate degradation. Its pathway is cell wall biogenesis; peptidoglycan recycling. Catalyzes the specific phosphorylation of 1,6-anhydro-N-acetylmuramic acid (anhMurNAc) with the simultaneous cleavage of the 1,6-anhydro ring, generating MurNAc-6-P. Is required for the utilization of anhMurNAc either imported from the medium or derived from its own cell wall murein, and thus plays a role in cell wall recycling. In Rhodopseudomonas palustris (strain HaA2), this protein is Anhydro-N-acetylmuramic acid kinase.